We begin with the raw amino-acid sequence, 489 residues long: Probable cytosol aminopeptidase (489 aa).

Positions 260 and 265 each coordinate Mn(2+). Lys-272 is an active-site residue. Positions 283, 342, and 344 each coordinate Mn(2+). The active site involves Arg-346.

Belongs to the peptidase M17 family. Requires Mn(2+) as cofactor.

The protein resides in the cytoplasm. It carries out the reaction Release of an N-terminal amino acid, Xaa-|-Yaa-, in which Xaa is preferably Leu, but may be other amino acids including Pro although not Arg or Lys, and Yaa may be Pro. Amino acid amides and methyl esters are also readily hydrolyzed, but rates on arylamides are exceedingly low.. The catalysed reaction is Release of an N-terminal amino acid, preferentially leucine, but not glutamic or aspartic acids.. Functionally, presumably involved in the processing and regular turnover of intracellular proteins. Catalyzes the removal of unsubstituted N-terminal amino acids from various peptides. In Alcanivorax borkumensis (strain ATCC 700651 / DSM 11573 / NCIMB 13689 / SK2), this protein is Probable cytosol aminopeptidase.